The chain runs to 430 residues: Divergent protein kinase domain 2A (430 aa).

An N-terminal signal peptide occupies residues 1-35; the sequence is MWRLVPPKLGRLSRSLKLAALGSLLVLMVLHSPSL.

Belongs to the DIPK family.

It is found in the cytoplasmic vesicle. The protein localises to the COPI-coated vesicle. The protein resides in the golgi apparatus. Its subcellular location is the secreted. May play a role in cardiomyocyte proliferation through paracrine signaling and activation of the PPI3K-AKT-CDK7 signaling cascade. The polypeptide is Divergent protein kinase domain 2A (Homo sapiens (Human)).